A 244-amino-acid chain; its full sequence is Carboxy-S-adenosyl-L-methionine synthase (244 aa).

Residues tyrosine 40, 65–67 (GCS), 90–91 (DN), asparagine 134, and arginine 201 each bind S-adenosyl-L-methionine.

Belongs to the class I-like SAM-binding methyltransferase superfamily. Cx-SAM synthase family. As to quaternary structure, homodimer.

It catalyses the reaction prephenate + S-adenosyl-L-methionine = carboxy-S-adenosyl-L-methionine + 3-phenylpyruvate + H2O. Catalyzes the conversion of S-adenosyl-L-methionine (SAM) to carboxy-S-adenosyl-L-methionine (Cx-SAM). In Citrifermentans bemidjiense (strain ATCC BAA-1014 / DSM 16622 / JCM 12645 / Bem) (Geobacter bemidjiensis), this protein is Carboxy-S-adenosyl-L-methionine synthase.